The following is a 198-amino-acid chain: MASGNAHIGKPAPDFTGTAVVDGAFKEIKLSDYRGKYVVLFFYPLDFTFVCPTEIIAFSDHAEDFRKLGCEVLGVSVDSQFTHLAWINTPRKEGGLGPLNIPLLADVTKSLSQNYGVLKNDEGIAYRGLFIIDAKGVLRQITVNDLPVGRSVDEALRLVQAFQYTDEHGEVCPAGWKPGSDTIKPNVDDSKEYFSKHN.

Alanine 2 carries the post-translational modification N-acetylalanine. A Thioredoxin domain is found at 6–164; it reads AHIGKPAPDF…ALRLVQAFQY (159 aa). The Cysteine sulfenic acid (-SOH) intermediate role is filled by cysteine 51. The residue at position 112 (serine 112) is a Phosphoserine. Position 182 is a phosphothreonine (threonine 182). Residue lysine 196 is modified to N6-acetyllysine.

This sequence belongs to the peroxiredoxin family. AhpC/Prx1 subfamily. Homodimer; disulfide-linked, upon oxidation. 5 homodimers assemble to form a ring-like decamer. Interacts with TIPIN. In terms of processing, the enzyme can be inactivated by further oxidation of the cysteine sulfenic acid (C(P)-SOH) to sulphinic acid (C(P)-SO2H) instead of its condensation to a disulfide bond. It can be reactivated by forming a transient disulfide bond with sulfiredoxin SRXN1, which reduces the cysteine sulfinic acid in an ATP- and Mg-dependent manner. Acetylation increases resistance to transition to high molecular-mass complexes. Deacetylated by HDAC6 which decreases reducing activity.

The protein localises to the cytoplasm. It carries out the reaction a hydroperoxide + [thioredoxin]-dithiol = an alcohol + [thioredoxin]-disulfide + H2O. Functionally, thiol-specific peroxidase that catalyzes the reduction of hydrogen peroxide and organic hydroperoxides to water and alcohols, respectively. Plays a role in cell protection against oxidative stress by detoxifying peroxides and as sensor of hydrogen peroxide-mediated signaling events. Might participate in the signaling cascades of growth factors and tumor necrosis factor-alpha by regulating the intracellular concentrations of H(2)O(2). The sequence is that of Peroxiredoxin-2 (Prdx2) from Rattus norvegicus (Rat).